A 512-amino-acid chain; its full sequence is MLFQDLSFPAAVGAAFGAFAIYVVARCIYDLFFHPLRNFPGPKRAAIWSFYEFYYDVIKDGTYLWEIEKMHQRYGPIVRINSRSLHIHDPEYFSTIYAGSGRKVNKELSAVSGYTFPHSTISTLEHDLHRKRRAIVNPYFSKRAIADVEPVIHERLDTLISRLAEAKGNTVDLTCAFSAFTADVVTYHFYGSHANYIGSKDFKYGLKDALTVLLNLYNLTRFLPVPPTTIKNLPLPILGLINPNFPLVVSAREANKKMVLNYLDKPDEEKKAMKDARSKSVIVSALADSNVPDEEKTLDRLLDEGETIIFAGIDTTARTLAVALFHLLNNQDVLMKLRKELQTIAKSDGQQWTTTELEAVPYMRGVVQEAIRLAYGLVVRIPRISPHEALQYNGFVIPPGTPVSQSTYLVNNDASVFPNPQVFDPERWVKAAQDGTNLDKYMVSFSKGSRACLGINLAYAKLYLGIARVATSLDMELFETTRADIGVYHTRGFAFPKEGDGSVKARVRGLCK.

The helical transmembrane segment at 6-29 (LSFPAAVGAAFGAFAIYVVARCIY) threads the bilayer. Residue Cys452 participates in heme binding.

This sequence belongs to the cytochrome P450 family. Heme is required as a cofactor.

Its subcellular location is the membrane. It functions in the pathway secondary metabolite biosynthesis; terpenoid biosynthesis. Functionally, cytochrome P450 monooxygenase; part of the gene cluster that mediates the biosynthesis of the sesquiterpenoid aspterric acid (AA), an inhibitor of dihydroxy-acid dehydratase (DHAD) effective as an herbicide. PbrB catalyzes the second step within the pathway and converts (-)-daucane produced by the terpene cyclase pbrA into an alpha-epoxy carboxylate intermediate which is further converted into the tricyclic aspterric acid by the cytochrome P450 monooxygenase pbrC. This chain is Cytochrome P450 monooxygenase pbrB, found in Penicillium brasilianum.